The chain runs to 463 residues: FAD-dependent monooxygenase nodM (463 aa).

A helical transmembrane segment spans residues 5–25; sequence EFKVIIVGGSLAGLTLAHCLL. Residues E35, G49, R108, D305, and A318 each coordinate FAD. Residues 438–458 traverse the membrane as a helical segment; it reads ILLGFTGVFTSALAMVVLLHI.

It belongs to the paxM FAD-dependent monooxygenase family. FAD serves as cofactor.

Its subcellular location is the membrane. Its pathway is secondary metabolite biosynthesis. Its function is as follows. FAD-dependent monooxygenase; part of the gene cluster that mediates the biosynthesis of the indole diterpenes nodulisporic acids (NA). Nodulisporic acid A (NAA) and its chemically modified derivatives are of particular significance because of their highly potent insecticidal activity against blood-feeding arthropods and lack of observable adverse effects on mammals, in particular the tremogenicity associated with the paspaline-derived IDTs is not observed. The geranylgeranyl diphosphate (GGPP) synthase ggs1, localized outside of the cluster, is proposed to catalyze the first step in nodulisporic acid biosynthesis via conversion of farnesyl pyrophosphate and isopentyl pyrophosphate into geranylgeranyl pyrophosphate (GGPP). Condensation of indole-3-glycerol phosphate with GGPP by the prenyl transferase nodC then forms 3-geranylgeranylindole (3-GGI). Epoxidation by the FAD-dependent monooxygenase nodM leads to a single-epoxidized-GGI that is substrate of the terpene cyclase nodB for cyclization to yield emindole SB. The terminal methyl carbon, C28, of emindole SB is then oxidized by the cytochrome P450 monooxygenase nodW to produce nodulisporic acid F (NAF), the pentacyclic core of NAA. NAF is converted to nodulisporic acid E (NAE) via prenylation. This step is probably performed by one of the indole diterpene prenyltransferases nodD1 or nodD2. Several oxidation steps performed by the FAD-linked oxidoreductase nodO and one of the cytochrome P450 monooxygenase nodR, nodX or nodZ further convert NAE to nodulisporic acid D (NAD). NAD is substrate of cytochrome P450 monooxygenase nodJ to produce the precursor of nodulisporic acid C (NAC), converted to NAC by one of the indole diterpene prenyltransferases nodD1 or nodD2. The FAD-dependent monooxygenase nodY2 then oxidizes NAC to nodulisporic acid B (NAB). Finally NAB is converted to NAA by one of the cytochrome P450 monooxygenases nodR, nodX or nodZ. This chain is FAD-dependent monooxygenase nodM, found in Hypoxylon pulicicidum.